A 62-amino-acid polypeptide reads, in one-letter code: MPNPKRRHSKARTGNRRAHDHLSAHSLSECPNCHWKKMPHRACAKCGYYKGREVLEVEDNKK.

The span at 1 to 19 shows a compositional bias: basic residues; the sequence is MPNPKRRHSKARTGNRRAH. Positions 1–23 are disordered; it reads MPNPKRRHSKARTGNRRAHDHLS.

It belongs to the bacterial ribosomal protein bL32 family.

The chain is Large ribosomal subunit protein bL32 from Koribacter versatilis (strain Ellin345).